The chain runs to 179 residues: ATP synthase subunit delta (179 aa).

The protein belongs to the ATPase delta chain family. As to quaternary structure, F-type ATPases have 2 components, F(1) - the catalytic core - and F(0) - the membrane proton channel. F(1) has five subunits: alpha(3), beta(3), gamma(1), delta(1), epsilon(1). F(0) has three main subunits: a(1), b(2) and c(10-14). The alpha and beta chains form an alternating ring which encloses part of the gamma chain. F(1) is attached to F(0) by a central stalk formed by the gamma and epsilon chains, while a peripheral stalk is formed by the delta and b chains.

It is found in the cell membrane. In terms of biological role, f(1)F(0) ATP synthase produces ATP from ADP in the presence of a proton or sodium gradient. F-type ATPases consist of two structural domains, F(1) containing the extramembraneous catalytic core and F(0) containing the membrane proton channel, linked together by a central stalk and a peripheral stalk. During catalysis, ATP synthesis in the catalytic domain of F(1) is coupled via a rotary mechanism of the central stalk subunits to proton translocation. Functionally, this protein is part of the stalk that links CF(0) to CF(1). It either transmits conformational changes from CF(0) to CF(1) or is implicated in proton conduction. In Staphylococcus carnosus (strain TM300), this protein is ATP synthase subunit delta.